A 362-amino-acid polypeptide reads, in one-letter code: MRDETPEQPAPLRFGYTTGSCATATSLAAARLLLAGQADDAVEIVLPKGQRVMMRLEFCRATADGAEAGTIKDAGDDPDVTHGALIFARVALAAAPGVRFHAGPGVGTVTRAGLMLPVGEPAINPVPRQMMTTHLEALAAEHGYAGGFDVTIGVEGGEMLALKTMNPRLGIVGGLSILGTTGIVRPFSCSAYIASIHQGIDVARANGIAHIAACTGNASEDAMRAHYQLPDMALIEMGDFAGAVLKHLRRAPVARLSMCGGFGKLSKLAAGHLDLHSRHSSIDLPLLAQWAAEAGANDALQAAMRAANTSQEALKLAQADGVPLGDLVCAHALRVARDIVPPSVVIEMFAIDRQGRFVGVAR.

Belongs to the CbiD family.

The catalysed reaction is Co-precorrin-5B + S-adenosyl-L-methionine = Co-precorrin-6A + S-adenosyl-L-homocysteine. It participates in cofactor biosynthesis; adenosylcobalamin biosynthesis; cob(II)yrinate a,c-diamide from sirohydrochlorin (anaerobic route): step 6/10. Functionally, catalyzes the methylation of C-1 in cobalt-precorrin-5B to form cobalt-precorrin-6A. This Burkholderia orbicola (strain MC0-3) protein is Cobalt-precorrin-5B C(1)-methyltransferase.